The chain runs to 507 residues: Protein disulfide-isomerase (507 aa).

Positions 1–20 (MASMVSFCFLLLFLAFFASS) are cleaved as a signal peptide. Positions 21–144 (FNEIYAEESE…IVDYLKKQSG (124 aa)) constitute a Thioredoxin 1 domain. Catalysis depends on nucleophile residues C62 and C65. C62 and C65 are oxidised to a cystine. 2 N-linked (GlcNAc...) asparagine glycosylation sites follow: N181 and N278. Residues 365-485 (YRKSEPIPEH…FIEFIEKNRE (121 aa)) form the Thioredoxin 2 domain. Catalysis depends on nucleophile residues C407 and C410. C407 and C410 are oxidised to a cystine. Residues 484–507 (REKSSKKESIVKDDQTDSETKAEL) are disordered. The Prevents secretion from ER motif lies at 504 to 507 (KAEL).

This sequence belongs to the protein disulfide isomerase family.

The protein localises to the endoplasmic reticulum lumen. The catalysed reaction is Catalyzes the rearrangement of -S-S- bonds in proteins.. Participates in the folding of proteins containing disulfide bonds, may be involved in glycosylation, prolyl hydroxylation and triglyceride transfer. This is Protein disulfide-isomerase (PDI) from Datisca glomerata (Durango root).